The sequence spans 574 residues: Septation ring formation regulator EzrA (574 aa).

At 1–7 (MSSGIIL) the chain is on the extracellular side. Residues 8–26 (LIVAIVLLVIIAYLVGVII) form a helical membrane-spanning segment. The Cytoplasmic segment spans residues 27–574 (RKRNDSLITS…YEKTREHIRF (548 aa)). Coiled coils occupy residues 102–141 (NFIRAKHEINSVESQLNLVEEDIASIREALNILKEQEEKN), 274–350 (ELVT…ETES), and 459–520 (QLEA…SFEA).

This sequence belongs to the EzrA family.

Its subcellular location is the cell membrane. Negative regulator of FtsZ ring formation; modulates the frequency and position of FtsZ ring formation. Inhibits FtsZ ring formation at polar sites. Interacts either with FtsZ or with one of its binding partners to promote depolymerization. This chain is Septation ring formation regulator EzrA, found in Streptococcus pyogenes serotype M3 (strain SSI-1).